Consider the following 429-residue polypeptide: UDP-N-acetylglucosamine 1-carboxyvinyltransferase (429 aa).

22–23 (KN) contacts phosphoenolpyruvate. Position 102 (Arg-102) interacts with UDP-N-acetyl-alpha-D-glucosamine. Cys-126 functions as the Proton donor in the catalytic mechanism. Cys-126 is modified (2-(S-cysteinyl)pyruvic acid O-phosphothioketal). UDP-N-acetyl-alpha-D-glucosamine-binding positions include 131 to 135 (RPVDL), Asp-316, and Ile-338.

The protein belongs to the EPSP synthase family. MurA subfamily.

The protein resides in the cytoplasm. The catalysed reaction is phosphoenolpyruvate + UDP-N-acetyl-alpha-D-glucosamine = UDP-N-acetyl-3-O-(1-carboxyvinyl)-alpha-D-glucosamine + phosphate. Its pathway is cell wall biogenesis; peptidoglycan biosynthesis. Its function is as follows. Cell wall formation. Adds enolpyruvyl to UDP-N-acetylglucosamine. In Rhodopseudomonas palustris (strain BisB18), this protein is UDP-N-acetylglucosamine 1-carboxyvinyltransferase.